The sequence spans 353 residues: ATP-dependent kinase YFH7 (353 aa).

Position 31-39 (31-39 (GSPGSGKST)) interacts with ATP.

This sequence belongs to the YFH7 family.

Its function is as follows. ATP-dependent kinase that could be involved in endoplasmic reticulum membrane assembly. This is ATP-dependent kinase YFH7 (YFH7) from Saccharomyces cerevisiae (strain RM11-1a) (Baker's yeast).